The sequence spans 367 residues: Peptide chain release factor 2 (367 aa).

An N5-methylglutamine modification is found at Gln-254.

This sequence belongs to the prokaryotic/mitochondrial release factor family. In terms of processing, methylated by PrmC. Methylation increases the termination efficiency of RF2.

It localises to the cytoplasm. Its function is as follows. Peptide chain release factor 2 directs the termination of translation in response to the peptide chain termination codons UGA and UAA. This Neisseria meningitidis serogroup A / serotype 4A (strain DSM 15465 / Z2491) protein is Peptide chain release factor 2.